Reading from the N-terminus, the 219-residue chain is Proteasome subunit beta (219 aa).

Residues 1-14 (MISNSEYHKEYMKG) constitute a propeptide, removed in mature form; by autocatalysis. The active-site Nucleophile is the T15.

Belongs to the peptidase T1B family. As to quaternary structure, the 20S proteasome core is composed of 14 alpha and 14 beta subunits that assemble into four stacked heptameric rings, resulting in a barrel-shaped structure. The two inner rings, each composed of seven catalytic beta subunits, are sandwiched by two outer rings, each composed of seven alpha subunits. The catalytic chamber with the active sites is on the inside of the barrel. Has a gated structure, the ends of the cylinder being occluded by the N-termini of the alpha-subunits. Is capped at one or both ends by the proteasome regulatory ATPase, PAN.

Its subcellular location is the cytoplasm. The catalysed reaction is Cleavage of peptide bonds with very broad specificity.. With respect to regulation, the formation of the proteasomal ATPase PAN-20S proteasome complex, via the docking of the C-termini of PAN into the intersubunit pockets in the alpha-rings, triggers opening of the gate for substrate entry. Interconversion between the open-gate and close-gate conformations leads to a dynamic regulation of the 20S proteasome proteolysis activity. Component of the proteasome core, a large protease complex with broad specificity involved in protein degradation. The polypeptide is Proteasome subunit beta (Methanococcus maripaludis (strain C5 / ATCC BAA-1333)).